The chain runs to 77 residues: U8-lycotoxin-Ls1b (77 aa).

The N-terminal stretch at 1–20 is a signal peptide; sequence MKLIIFTGLVLFAIVSLIEA. The propeptide occupies 21–26; that stretch reads QAENEK.

Belongs to the neurotoxin 19 (CSTX) family. 08 (U8-Lctx) subfamily. Contains 4 disulfide bonds. As to expression, expressed by the venom gland.

The protein resides in the secreted. The polypeptide is U8-lycotoxin-Ls1b (Lycosa singoriensis (Wolf spider)).